Here is a 368-residue protein sequence, read N- to C-terminus: Apolipoprotein A-V (368 aa).

The first 20 residues, 1–20, serve as a signal peptide directing secretion; the sequence is MAAVITWALALLAVFASTQA. Serine 52 bears the Phosphoserine mark. A coiled-coil region spans residues 231–255; it reads TRKAKDLHTSIQRNLDQLRDELSAF. Positions 305–333 are disordered; the sequence is EEIQHQLAPPPPSHSAFAPELGHSDSNKA.

The protein belongs to the apolipoprotein A1/A4/E family. As to quaternary structure, interacts with GPIHBP1. Interacts with SORL1; this interaction leads to APOA5 internalization and sorting either to lysosomes and degradation, or to the trans-Golgi network. Post-translationally, phosphorylated by FAM20C in the extracellular medium. As to expression, liver.

The protein resides in the secreted. Its subcellular location is the early endosome. It localises to the late endosome. It is found in the golgi apparatus. The protein localises to the trans-Golgi network. Minor apolipoprotein mainly associated with HDL and to a lesser extent with VLDL. May also be associated with chylomicrons. Important determinant of plasma triglyceride (TG) levels by both being a potent stimulator of apo-CII lipoprotein lipase (LPL) TG hydrolysis and an inhibitor of the hepatic VLDL-TG production rate (without affecting the VLDL-apoB production rate). Activates poorly lecithin:cholesterol acyltransferase (LCAT) and does not enhance efflux of cholesterol from macrophages. Binds heparin. This chain is Apolipoprotein A-V (Apoa5), found in Mus musculus (Mouse).